A 130-amino-acid chain; its full sequence is Small ribosomal subunit protein uS8 (130 aa).

This sequence belongs to the universal ribosomal protein uS8 family. As to quaternary structure, part of the 30S ribosomal subunit.

One of the primary rRNA binding proteins, it binds directly to 16S rRNA central domain where it helps coordinate assembly of the platform of the 30S subunit. This chain is Small ribosomal subunit protein uS8, found in Methanosarcina mazei (strain ATCC BAA-159 / DSM 3647 / Goe1 / Go1 / JCM 11833 / OCM 88) (Methanosarcina frisia).